The sequence spans 162 residues: Peptidyl-prolyl cis-trans isomerase-like 1 (162 aa).

Residues 1 to 155 (MATDVAFDTS…DGVKILRARI (155 aa)) form the PPIase cyclophilin-type domain.

It belongs to the cyclophilin-type PPIase family. PPIL1 subfamily.

It catalyses the reaction [protein]-peptidylproline (omega=180) = [protein]-peptidylproline (omega=0). Functionally, PPIases accelerate the folding of proteins. It catalyzes the cis-trans isomerization of proline imidic peptide bonds in oligopeptides. The sequence is that of Peptidyl-prolyl cis-trans isomerase-like 1 (cypC) from Aspergillus niger.